The primary structure comprises 325 residues: Cln5-like protein 2 (325 aa).

A signal peptide spans 1–19; that stretch reads MNKLIFIIICLGIVDKTIS. N-linked (GlcNAc...) asparagine glycans are attached at residues Asn-88, Asn-117, Asn-133, Asn-163, Asn-182, Asn-189, Asn-238, and Asn-262.

Belongs to the CLN5 family.

This is Cln5-like protein 2 (cln5lb) from Dictyostelium discoideum (Social amoeba).